A 373-amino-acid chain; its full sequence is tRNA-specific 2-thiouridylase MnmA (373 aa).

ATP is bound by residues 12–19 (GMSGGVDS) and Met38. The interval 98-100 (NPD) is interaction with target base in tRNA. The active-site Nucleophile is Cys103. Cys103 and Cys200 are oxidised to a cystine. Residue Gly127 coordinates ATP. The interaction with tRNA stretch occupies residues 150–152 (KDQ). Cys200 serves as the catalytic Cysteine persulfide intermediate. Positions 312–313 (RY) are interaction with tRNA.

It belongs to the MnmA/TRMU family.

The protein resides in the cytoplasm. It catalyses the reaction S-sulfanyl-L-cysteinyl-[protein] + uridine(34) in tRNA + AH2 + ATP = 2-thiouridine(34) in tRNA + L-cysteinyl-[protein] + A + AMP + diphosphate + H(+). Catalyzes the 2-thiolation of uridine at the wobble position (U34) of tRNA, leading to the formation of s(2)U34. The chain is tRNA-specific 2-thiouridylase MnmA from Streptococcus sanguinis (strain SK36).